The primary structure comprises 213 residues: Urease accessory protein UreG (213 aa).

17–24 (GPVGSGKT) contacts GTP.

It belongs to the SIMIBI class G3E GTPase family. UreG subfamily. In terms of assembly, homodimer. UreD, UreF and UreG form a complex that acts as a GTP-hydrolysis-dependent molecular chaperone, activating the urease apoprotein by helping to assemble the nickel containing metallocenter of UreC. The UreE protein probably delivers the nickel.

The protein resides in the cytoplasm. Functionally, facilitates the functional incorporation of the urease nickel metallocenter. This process requires GTP hydrolysis, probably effectuated by UreG. The chain is Urease accessory protein UreG from Delftia acidovorans (strain DSM 14801 / SPH-1).